The chain runs to 159 residues: Vasotocin-neurophysin VT (159 aa).

Residues 1–17 (TAPVPACFLCLLALSSA) form the signal peptide. Residues cysteine 18 and cysteine 23 are joined by a disulfide bond. Glycine 26 carries the post-translational modification Glycine amide. 7 disulfide bridges follow: cysteine 39-cysteine 83, cysteine 42-cysteine 56, cysteine 50-cysteine 73, cysteine 57-cysteine 63, cysteine 90-cysteine 102, cysteine 96-cysteine 114, and cysteine 103-cysteine 108. Asparagine 129 carries an N-linked (GlcNAc...) asparagine glycan.

This sequence belongs to the vasopressin/oxytocin family. Post-translationally, seven disulfide bonds are present in neurophysin.

It localises to the secreted. Vasotocin is an antidiuretic hormone. In Bufo japonicus (Japanese common toad), this protein is Vasotocin-neurophysin VT.